The following is a 315-amino-acid chain: Putative olfactory receptor 2I1 (315 aa).

Topologically, residues 1–24 (MKANYSAEERFLLLGFSDWPSLQP) are extracellular. A helical membrane pass occupies residues 25–48 (VLFALVLLCYLLTLTGNSALVLLA). The Cytoplasmic segment spans residues 49 to 56 (VRDPRLHT). Residues 57-78 (PMYYFLCHLALVDAGFTTSVVP) traverse the membrane as a helical segment. The Extracellular segment spans residues 79 to 99 (PLLANLRGPALWLPRSHCTAQ). Cys96 and Cys188 are disulfide-bonded. A helical membrane pass occupies residues 100–119 (LCASLALGSAECVLLAVMAL). Residues 120–138 (DRAAAVCRPLRYAGLVSPR) lie on the Cytoplasmic side of the membrane. A helical membrane pass occupies residues 139–157 (LCRTLASASWLSGLTNSVA). Topologically, residues 158–195 (QTALLAERPLCAPRLLDHFICELPALLKLACGGDGDTT) are extracellular. The helical transmembrane segment at 196 to 219 (ENQMFAARVVILLLPFAVILASYG) threads the bilayer. At 220 to 236 (AVARAVCCMRFSGGRRR) the chain is on the cytoplasmic side. A helical transmembrane segment spans residues 237–259 (AVGTCGSHLTAVCLFYGSAIYTY). The Extracellular segment spans residues 260 to 272 (LQPAQRYNQARGK). A helical transmembrane segment spans residues 273–292 (FVSLFYTVVTPALNPLIYTL). Topologically, residues 293–315 (RNKKVKGAARRLLRSLGRGQAGQ) are cytoplasmic.

It belongs to the G-protein coupled receptor 1 family.

The protein resides in the cell membrane. Functionally, odorant receptor. This Homo sapiens (Human) protein is Putative olfactory receptor 2I1.